The following is a 466-amino-acid chain: UDP-N-acetylmuramate--L-alanine ligase (466 aa).

An ATP-binding site is contributed by 114–120; it reads GTHGKTT.

The protein belongs to the MurCDEF family.

It is found in the cytoplasm. The enzyme catalyses UDP-N-acetyl-alpha-D-muramate + L-alanine + ATP = UDP-N-acetyl-alpha-D-muramoyl-L-alanine + ADP + phosphate + H(+). It participates in cell wall biogenesis; peptidoglycan biosynthesis. Cell wall formation. The sequence is that of UDP-N-acetylmuramate--L-alanine ligase from Mesorhizobium japonicum (strain LMG 29417 / CECT 9101 / MAFF 303099) (Mesorhizobium loti (strain MAFF 303099)).